The following is a 562-amino-acid chain: Zinc finger protein 579 (562 aa).

Pro residues predominate over residues M1–G11. Positions M1–P43 are disordered. Residues H15–G33 show a composition bias toward basic residues. 3 consecutive C2H2-type zinc fingers follow at residues L44–H66, H72–H94, and L100–H123. R92 carries the omega-N-methylarginine modification. The tract at residues T139–A203 is disordered. Residues S194 and S196 each carry the phosphoserine modification. C2H2-type zinc fingers lie at residues H270–H292 and F298–H320. Positions A327 to A379 are disordered. The span at P349–G369 shows a compositional bias: gly residues. 3 consecutive C2H2-type zinc fingers follow at residues F384 to H406, F412 to H434, and H441 to H463. Residues Q477–S562 form a disordered region. Pro residues-rich tracts occupy residues T482–L491 and P512–P525. S483 is subject to Phosphoserine.

The protein belongs to the krueppel C2H2-type zinc-finger protein family.

It localises to the nucleus. In terms of biological role, may be involved in transcriptional regulation. In Homo sapiens (Human), this protein is Zinc finger protein 579 (ZNF579).